We begin with the raw amino-acid sequence, 167 residues long: MMINEQIRAREVRLVGANGDQLGIKSRNDALDLAANLNLDLVLVAPNAKPPVCRIMDYGKFRFEQQKKEKEQRKNQKVISMKEVRLSPTIDEHDFNTKLRNAIKFLEKGDKVKASIRFKGRAITHKEIGQRVLDRFSEACAEVSTVESKPKMEGRSMFLVLAPKNDK.

This sequence belongs to the IF-3 family. As to quaternary structure, monomer.

The protein localises to the cytoplasm. Functionally, IF-3 binds to the 30S ribosomal subunit and shifts the equilibrium between 70S ribosomes and their 50S and 30S subunits in favor of the free subunits, thus enhancing the availability of 30S subunits on which protein synthesis initiation begins. This chain is Translation initiation factor IF-3, found in Bacillus cereus (strain ATCC 14579 / DSM 31 / CCUG 7414 / JCM 2152 / NBRC 15305 / NCIMB 9373 / NCTC 2599 / NRRL B-3711).